A 233-amino-acid chain; its full sequence is Orotidine 5'-phosphate decarboxylase (233 aa).

Residues Asp11, Lys34, 61–70, Thr117, Arg179, Gln188, Gly208, and Arg209 contribute to the substrate site; that span reads DLKLHDIPNT. Lys63 (proton donor) is an active-site residue.

It belongs to the OMP decarboxylase family. Type 1 subfamily. Homodimer.

The enzyme catalyses orotidine 5'-phosphate + H(+) = UMP + CO2. The protein operates within pyrimidine metabolism; UMP biosynthesis via de novo pathway; UMP from orotate: step 2/2. Catalyzes the decarboxylation of orotidine 5'-monophosphate (OMP) to uridine 5'-monophosphate (UMP). The polypeptide is Orotidine 5'-phosphate decarboxylase (Streptococcus pneumoniae (strain JJA)).